The chain runs to 274 residues: Diaminopimelate epimerase (274 aa).

Substrate contacts are provided by Asn11, Gln44, and Asn64. The Proton donor role is filled by Cys73. Substrate-binding positions include 74–75, Asn157, Asn190, and 208–209; these read GN and ER. The active-site Proton acceptor is the Cys217. Position 218–219 (218–219) interacts with substrate; sequence GS.

It belongs to the diaminopimelate epimerase family. In terms of assembly, homodimer.

Its subcellular location is the cytoplasm. The catalysed reaction is (2S,6S)-2,6-diaminopimelate = meso-2,6-diaminopimelate. Its pathway is amino-acid biosynthesis; L-lysine biosynthesis via DAP pathway; DL-2,6-diaminopimelate from LL-2,6-diaminopimelate: step 1/1. Its function is as follows. Catalyzes the stereoinversion of LL-2,6-diaminopimelate (L,L-DAP) to meso-diaminopimelate (meso-DAP), a precursor of L-lysine and an essential component of the bacterial peptidoglycan. This chain is Diaminopimelate epimerase, found in Cronobacter sakazakii (strain ATCC BAA-894) (Enterobacter sakazakii).